The chain runs to 219 residues: Glutathione S-transferase (219 aa).

Residues 2–89 (SQPILGYWDI…YLGRKYKLNG (88 aa)) form the GST N-terminal domain. Residues 8–9 (YW), 44–47 (RSEW), K51, 60–61 (NL), and 73–74 (QT) each bind glutathione. Positions 91 to 207 (NDHEEIRISM…YIKKQQPKTF (117 aa)) constitute a GST C-terminal domain. Substrate is bound at residue Y117.

Belongs to the GST superfamily. Mu family. As to quaternary structure, homodimer.

It is found in the cytoplasm. The enzyme catalyses RX + glutathione = an S-substituted glutathione + a halide anion + H(+). The protein is Glutathione S-transferase of Dermatophagoides pteronyssinus (European house dust mite).